Consider the following 93-residue polypeptide: UPF0728 protein C10orf53 homolog (93 aa).

The protein belongs to the UPF0728 family.

The polypeptide is UPF0728 protein C10orf53 homolog (Xenopus tropicalis (Western clawed frog)).